Here is a 496-residue protein sequence, read N- to C-terminus: MVKEVVLGIDLGTSAIKIIAVDQLGNVIESVSETLKLYQENPGYSEQDPNEWFEATKKGIKELIQSTEMSDKIVKGISFSGQMHGLVIVDDNGIPLRKAILWNDTRNSIQCRQIEDIYGERLNYNPILEGFTLPKMLWVQQHEPEIWNRVDVFMLPKDYLRYCLTQTIHMEYSDACSTLLFNPENYEWTRDVGDTFNIGDIYPPLVKSHSYVGNVTSSLAKELGLSSDVAVYAGGGDNACGAIGAGVIHDKSALCSIGTSGVVLNVEYQRVTSYDSNLHLFNHSVPDTYYAMGVTLAAGYSLNWLKQTFFENESFEEILNLAASSKMGANGLLFTPYLAGERTPHGDAQIRGSFIGISGQHTKADFARAVIEGITYSLYDSIKIMRRAGHEMNSITSIGGGAKSRFWLQLQADIFNVQIKRLKHEEGPSMGAAILAAYGLGWFKTIESCVEAFIKVDEVFEPNNENHDLYEQYYSVYEAIYKQTKQLTADLLTITN.

83–84 (MH) is a binding site for substrate. Aspartate 237 serves as the catalytic Proton acceptor.

Belongs to the FGGY kinase family.

The enzyme catalyses D-xylulose + ATP = D-xylulose 5-phosphate + ADP + H(+). Catalyzes the phosphorylation of D-xylulose to D-xylulose 5-phosphate. The sequence is that of Xylulose kinase from Staphylococcus epidermidis (strain ATCC 35984 / DSM 28319 / BCRC 17069 / CCUG 31568 / BM 3577 / RP62A).